The chain runs to 440 residues: Beta-1,3-galactosyl-O-glycosyl-glycoprotein beta-1,6-N-acetylglucosaminyltransferase (440 aa).

The Cytoplasmic portion of the chain corresponds to 1 to 9 (MKMAGWKKK). A helical; Signal-anchor for type II membrane protein transmembrane segment spans residues 10–30 (LCPGHHLWALGCYMLLAVVSL). The Lumenal portion of the chain corresponds to 31 to 440 (RLSLRFKCDV…RHKAIYGTEL (410 aa)). N-linked (GlcNAc...) asparagine; by host glycans are attached at residues asparagine 72 and asparagine 108. 4 disulfides stabilise this stretch: cysteine 73-cysteine 230, cysteine 164-cysteine 384, cysteine 185-cysteine 212, and cysteine 393-cysteine 425.

Belongs to the glycosyltransferase 14 family.

The protein resides in the host Golgi apparatus membrane. It carries out the reaction a 3-O-[beta-D-galactosyl-(1-&gt;3)-N-acetyl-alpha-D-galactosaminyl]-L-seryl-[protein] + UDP-N-acetyl-alpha-D-glucosamine = 3-O-{beta-D-galactosyl-(1-&gt;3)-[N-acetyl-beta-D-glucosaminyl-(1-&gt;6)]-N-acetyl-alpha-D-galactosaminyl}-L-seryl-[protein] + UDP + H(+). It catalyses the reaction a 3-O-[beta-D-galactosyl-(1-&gt;3)-N-acetyl-alpha-D-galactosaminyl]-L-threonyl-[protein] + UDP-N-acetyl-alpha-D-glucosamine = a 3-O-{beta-D-galactosyl-(1-&gt;3)-[N-acetyl-beta-D-glucosaminyl-(1-&gt;6)]-N-acetyl-alpha-D-galactosaminyl}-L-threonyl-[protein] + UDP + H(+). The catalysed reaction is a beta-D-Gal-(1-&gt;4)-beta-D-GlcNAc-(1-&gt;3)-beta-D-Gal-(1-&gt;4)-beta-D-GlcNAc derivative + UDP-N-acetyl-alpha-D-glucosamine = a beta-D-Gal-(1-&gt;4)-beta-D-GlcNAc-(1-&gt;3)-[beta-D-GlcNAc-(1-&gt;6)]-beta-D-Gal-(1-&gt;4)-N-acetyl-beta-D-glucosaminyl derivative + UDP + H(+). The enzyme catalyses 3-O-[N-acetyl-beta-D-glucosaminyl-(1-&gt;3)-N-acetyl-alpha-D-galactosaminyl]-L-seryl-[protein] + UDP-N-acetyl-alpha-D-glucosamine = 3-O-[N-acetyl-beta-D-glucosaminyl-(1-&gt;3)-[N-acetyl-beta-D-glucosaminyl-(1-&gt;6)]-N-acetyl-alpha-D-galactosaminyl]-L-seryl-[protein] + UDP + H(+). It carries out the reaction a 3-O-[N-acetyl-beta-D-glucosaminyl-(1-&gt;3)-N-acetyl-alpha-D-galactosaminyl]-L-threonyl-[protein] + UDP-N-acetyl-alpha-D-glucosamine = 3-O-[N-acetyl-beta-D-glucosaminyl-(1-&gt;3)-[N-acetyl-beta-D-glucosaminyl-(1-&gt;6)]-N-acetyl-alpha-D-galactosaminyl]-L-threonyl-[protein] + UDP + H(+). The protein operates within protein modification; protein glycosylation. Functionally, non-essential glycosyltransferase that can synthesize all known mucin beta 6 N-acetylglucosaminides. Mediates core 2 and core 4 O-glycan branching, 2 important steps in mucin-type biosynthesis. Has also I-branching enzyme activity by converting linear into branched poly-N-acetyllactosaminoglycans. Contributes to the post-translational modifications of structural proteins. The chain is Beta-1,3-galactosyl-O-glycosyl-glycoprotein beta-1,6-N-acetylglucosaminyltransferase (Bo17) from Bovine herpesvirus 4 (strain V. test) (BoHV-4).